Here is a 463-residue protein sequence, read N- to C-terminus: Casein kinase 1 (463 aa).

One can recognise a Protein kinase domain in the interval 9 to 278 (FKLGRKIGSG…LKRLFRDLFI (270 aa)). Residues 15–23 (IGSGSFGEL) and Lys38 each bind ATP. The Proton acceptor role is filled by Asp128. Over residues 296 to 306 (ESNRLRSSGRT) the composition is skewed to polar residues. Residues 296-448 (ESNRLRSSGR…TARNVHDDPT (153 aa)) form a disordered region. The span at 315-328 (ERTERAAARQDVPD) shows a compositional bias: basic and acidic residues. Composition is skewed to polar residues over residues 376–396 (TSSS…SRPS) and 404–440 (NRSN…TKTA).

This sequence belongs to the protein kinase superfamily. CK1 Ser/Thr protein kinase family. Casein kinase I subfamily. As to quaternary structure, monomer. Autophosphorylated. In terms of tissue distribution, expressed in leaves, stems, panicles and seeds. Expressed in root tissues and lamina joints.

It localises to the cytoplasm. The protein localises to the nucleus. The enzyme catalyses L-seryl-[protein] + ATP = O-phospho-L-seryl-[protein] + ADP + H(+). It catalyses the reaction L-threonyl-[protein] + ATP = O-phospho-L-threonyl-[protein] + ADP + H(+). Its activity is regulated as follows. Inhibited by N-(2-aminoethyl)-5-chloroisoquinoline-8-sulfonamide (CKI-7). Functionally, casein kinases are operationally defined by their preferential utilization of acidic proteins such as caseins as substrates. Can phosphorylate casein in vitro. Required for normal root development through modulation of cell elongation. Plants silencing CKI1 show abnormal root development, with reduced number of lateral and adventitious roots, and shortened primary roots as a result of reduced cell elongation. May be involved in abscisic acid (ABA) and brassinosteroid (BR) signaling pathways. Plays an important role in the adaptive growth and fitness under low temperature (LT) conditions. May confer tolerance to LT through an auxin-dependent process. The sequence is that of Casein kinase 1 (CKI1) from Oryza sativa subsp. japonica (Rice).